The primary structure comprises 120 residues: Large ribosomal subunit protein bL12 (120 aa).

Belongs to the bacterial ribosomal protein bL12 family. Homodimer. Part of the ribosomal stalk of the 50S ribosomal subunit. Forms a multimeric L10(L12)X complex, where L10 forms an elongated spine to which 2 to 4 L12 dimers bind in a sequential fashion. Binds GTP-bound translation factors.

Forms part of the ribosomal stalk which helps the ribosome interact with GTP-bound translation factors. Is thus essential for accurate translation. This is Large ribosomal subunit protein bL12 from Clostridium botulinum (strain Alaska E43 / Type E3).